A 315-amino-acid polypeptide reads, in one-letter code: Nucleotide-binding protein PsycPRwf_2129 (315 aa).

29-36 contributes to the ATP binding site; sequence GRSGSGKT. Position 79-82 (79-82) interacts with GTP; sequence DIRT.

This sequence belongs to the RapZ-like family.

Displays ATPase and GTPase activities. In Psychrobacter sp. (strain PRwf-1), this protein is Nucleotide-binding protein PsycPRwf_2129.